Here is a 236-residue protein sequence, read N- to C-terminus: Ribose-5-phosphate isomerase (236 aa).

Residues 27–30 (TGST), 84–87 (DGTD), and 97–100 (KGRG) contribute to the substrate site. Glu-106 (proton acceptor) is an active-site residue. Lys-124 is a substrate binding site.

The protein belongs to the ribose 5-phosphate isomerase family. In terms of assembly, homodimer.

The catalysed reaction is aldehydo-D-ribose 5-phosphate = D-ribulose 5-phosphate. The protein operates within carbohydrate degradation; pentose phosphate pathway; D-ribose 5-phosphate from D-ribulose 5-phosphate (non-oxidative stage): step 1/1. Involved in the first step of the non-oxidative branch of the pentose phosphate pathway. It catalyzes the reversible conversion of ribose-5-phosphate to ribulose 5-phosphate. The protein is Ribose-5-phosphate isomerase of Plasmodium falciparum (isolate 3D7).